The chain runs to 430 residues: Pre-B-cell leukemia transcription factor 2 (430 aa).

Positions 1 to 52 are disordered; sequence MDERLLGPPPPGGGRGGLGLVGAEPGGPGEPPGGGDPGGGSGGVPGGRGKQD. The segment covering 13 to 48 has biased composition (gly residues); it reads GGRGGLGLVGAEPGGPGEPPGGGDPGGGSGGVPGGR. One can recognise a PBC domain in the interval 48-243; the sequence is RGKQDIGDIL…VMILRSRFLD (196 aa). Residues 55–134 are PBC-A; sequence DILQQIMTIT…EGVAGPEKGG (80 aa). Phosphoserine occurs at positions 136, 151, and 159. A PBC-B region spans residues 137–243; sequence AAAAAAAAAS…VMILRSRFLD (107 aa). Positions 244 to 306 form a DNA-binding region, homeobox; TALE-type; that stretch reads ARRKRRNFSK…NKRIRYKKNI (63 aa). 2 disordered regions span residues 327–347 and 375–430; these read GGHSRTSSPTPPSSAGSGGSF and LRHS…DTSN. A phosphoserine mark is found at serine 330 and serine 395. A compositionally biased stretch (polar residues) spans 409 to 418; it reads VTPSSVTSPT.

It belongs to the TALE/PBX homeobox family. Forms heterodimers with MEIS1 and heterotrimers with MEIS1 and HOXA9. Interacts with PBXIP1.

The protein localises to the nucleus. Functionally, transcriptional activator that binds the sequence 5'-ATCAATCAA-3'. Activates transcription of PF4 in complex with MEIS1. This Mus musculus (Mouse) protein is Pre-B-cell leukemia transcription factor 2 (Pbx2).